The sequence spans 122 residues: Sperm-egg fusion protein LLCFC1 (122 aa).

A signal peptide spans 1 to 28 (MPPLAPQLCRAVFLVPILLLLQVKPLNG). The disordered stretch occupies residues 27–51 (NGSPGPKDGSQTEKTPSADQNQEQF). Residues 38-49 (TEKTPSADQNQE) show a composition bias toward polar residues.

The protein localises to the secreted. In terms of biological role, sperm protein required for fusion of sperm with the egg membrane during fertilization. The sequence is that of Sperm-egg fusion protein LLCFC1 from Homo sapiens (Human).